The sequence spans 297 residues: 33 kDa chaperonin (297 aa).

2 disulfide bridges follow: cysteine 232-cysteine 234 and cysteine 266-cysteine 269.

The protein belongs to the HSP33 family. Post-translationally, under oxidizing conditions two disulfide bonds are formed involving the reactive cysteines. Under reducing conditions zinc is bound to the reactive cysteines and the protein is inactive.

The protein localises to the cytoplasm. Redox regulated molecular chaperone. Protects both thermally unfolding and oxidatively damaged proteins from irreversible aggregation. Plays an important role in the bacterial defense system toward oxidative stress. The polypeptide is 33 kDa chaperonin (Pseudomonas aeruginosa (strain UCBPP-PA14)).